A 245-amino-acid polypeptide reads, in one-letter code: Biosynthetic peptidoglycan transglycosylase (245 aa).

A helical membrane pass occupies residues 19 to 39 (IVYAGAVFAAAWLATQLFYFV).

Belongs to the glycosyltransferase 51 family.

It is found in the cell inner membrane. The catalysed reaction is [GlcNAc-(1-&gt;4)-Mur2Ac(oyl-L-Ala-gamma-D-Glu-L-Lys-D-Ala-D-Ala)](n)-di-trans,octa-cis-undecaprenyl diphosphate + beta-D-GlcNAc-(1-&gt;4)-Mur2Ac(oyl-L-Ala-gamma-D-Glu-L-Lys-D-Ala-D-Ala)-di-trans,octa-cis-undecaprenyl diphosphate = [GlcNAc-(1-&gt;4)-Mur2Ac(oyl-L-Ala-gamma-D-Glu-L-Lys-D-Ala-D-Ala)](n+1)-di-trans,octa-cis-undecaprenyl diphosphate + di-trans,octa-cis-undecaprenyl diphosphate + H(+). It participates in cell wall biogenesis; peptidoglycan biosynthesis. Peptidoglycan polymerase that catalyzes glycan chain elongation from lipid-linked precursors. This Burkholderia multivorans (strain ATCC 17616 / 249) protein is Biosynthetic peptidoglycan transglycosylase.